The chain runs to 276 residues: Bis(5'-nucleosyl)-tetraphosphatase, symmetrical (276 aa).

Belongs to the Ap4A hydrolase family.

It carries out the reaction P(1),P(4)-bis(5'-adenosyl) tetraphosphate + H2O = 2 ADP + 2 H(+). Hydrolyzes diadenosine 5',5'''-P1,P4-tetraphosphate to yield ADP. This chain is Bis(5'-nucleosyl)-tetraphosphatase, symmetrical, found in Psychromonas ingrahamii (strain DSM 17664 / CCUG 51855 / 37).